Consider the following 105-residue polypeptide: uncharacterized protein (105 aa).

The ABM domain occupies 14–104 (HYITACLKII…VEWLMKSNVN (91 aa)).

This is an uncharacterized protein from Bacillus subtilis (strain 168).